We begin with the raw amino-acid sequence, 89 residues long: Small ribosomal subunit protein uS15 (89 aa).

It belongs to the universal ribosomal protein uS15 family. As to quaternary structure, part of the 30S ribosomal subunit. Forms a bridge to the 50S subunit in the 70S ribosome, contacting the 23S rRNA.

Functionally, one of the primary rRNA binding proteins, it binds directly to 16S rRNA where it helps nucleate assembly of the platform of the 30S subunit by binding and bridging several RNA helices of the 16S rRNA. In terms of biological role, forms an intersubunit bridge (bridge B4) with the 23S rRNA of the 50S subunit in the ribosome. This is Small ribosomal subunit protein uS15 from Photorhabdus laumondii subsp. laumondii (strain DSM 15139 / CIP 105565 / TT01) (Photorhabdus luminescens subsp. laumondii).